Consider the following 80-residue polypeptide: Small ribosomal subunit protein bS16 (80 aa).

It belongs to the bacterial ribosomal protein bS16 family.

The chain is Small ribosomal subunit protein bS16 from Acholeplasma laidlawii (strain PG-8A).